Reading from the N-terminus, the 102-residue chain is Large ribosomal subunit protein uL24 (102 aa).

This sequence belongs to the universal ribosomal protein uL24 family. As to quaternary structure, part of the 50S ribosomal subunit.

In terms of biological role, one of two assembly initiator proteins, it binds directly to the 5'-end of the 23S rRNA, where it nucleates assembly of the 50S subunit. One of the proteins that surrounds the polypeptide exit tunnel on the outside of the subunit. In Herpetosiphon aurantiacus (strain ATCC 23779 / DSM 785 / 114-95), this protein is Large ribosomal subunit protein uL24.